Reading from the N-terminus, the 424-residue chain is Histidine--tRNA ligase (424 aa).

It belongs to the class-II aminoacyl-tRNA synthetase family. As to quaternary structure, homodimer.

The protein resides in the cytoplasm. It catalyses the reaction tRNA(His) + L-histidine + ATP = L-histidyl-tRNA(His) + AMP + diphosphate + H(+). This is Histidine--tRNA ligase from Pectobacterium carotovorum subsp. carotovorum (strain PC1).